A 332-amino-acid polypeptide reads, in one-letter code: Cell growth regulator with RING finger domain protein 1 (332 aa).

The RING-type zinc-finger motif lies at 274-309 (CVVCQNGGVNWVLLPCRHACLCDSCVRYFKQCPMCR).

The protein localises to the nucleus. It localises to the endoplasmic reticulum. Able to inhibit growth in several cell lines. In Mus musculus (Mouse), this protein is Cell growth regulator with RING finger domain protein 1 (Cgrrf1).